We begin with the raw amino-acid sequence, 469 residues long: Glutamate--tRNA ligase 1 (469 aa).

The 'HIGH' region signature appears at 10–20 (PSPTGYLHIGG). Zn(2+) is bound by residues C99, C101, C126, and D128. A 'KMSKS' region motif is present at residues 237-241 (RLSKR). K240 is a binding site for ATP.

It belongs to the class-I aminoacyl-tRNA synthetase family. Glutamate--tRNA ligase type 1 subfamily. Monomer. It depends on Zn(2+) as a cofactor.

It localises to the cytoplasm. The enzyme catalyses tRNA(Glu) + L-glutamate + ATP = L-glutamyl-tRNA(Glu) + AMP + diphosphate. Catalyzes the attachment of glutamate to tRNA(Glu) in a two-step reaction: glutamate is first activated by ATP to form Glu-AMP and then transferred to the acceptor end of tRNA(Glu). This Coxiella burnetii (strain RSA 331 / Henzerling II) protein is Glutamate--tRNA ligase 1.